Reading from the N-terminus, the 351-residue chain is Glycerol-1-phosphate dehydrogenase [NAD(P)+] (351 aa).

NAD(+) contacts are provided by residues 97-101 (GKVID) and 119-122 (TSPS). Position 124 (Asp124) interacts with substrate. Ser128 contributes to the NAD(+) binding site. Residue Asp171 coordinates substrate. Zn(2+) contacts are provided by Asp171 and His251. A substrate-binding site is contributed by His255. Residue His267 participates in Zn(2+) binding.

This sequence belongs to the glycerol-1-phosphate dehydrogenase family. Homodimer. Zn(2+) serves as cofactor.

Its subcellular location is the cytoplasm. The enzyme catalyses sn-glycerol 1-phosphate + NAD(+) = dihydroxyacetone phosphate + NADH + H(+). It carries out the reaction sn-glycerol 1-phosphate + NADP(+) = dihydroxyacetone phosphate + NADPH + H(+). Its pathway is membrane lipid metabolism; glycerophospholipid metabolism. Its function is as follows. Catalyzes the NAD(P)H-dependent reduction of dihydroxyacetonephosphate (DHAP or glycerone phosphate) to glycerol 1-phosphate (G1P). The G1P thus generated is used as the glycerophosphate backbone of phospholipids in the cellular membranes of Archaea. The polypeptide is Glycerol-1-phosphate dehydrogenase [NAD(P)+] (Saccharolobus islandicus (strain L.S.2.15 / Lassen #1) (Sulfolobus islandicus)).